Here is a 172-residue protein sequence, read N- to C-terminus: NAD(P)H-quinone oxidoreductase subunit I, chloroplastic (172 aa).

2 consecutive 4Fe-4S ferredoxin-type domains span residues 55-84 (GRIHFEFDKCIACEVCVRVCPIDLPVVDWK) and 95-124 (LNYSIDFGICIFCGNCVEYCPTNCLSMTEE). [4Fe-4S] cluster-binding residues include Cys64, Cys67, Cys70, Cys74, Cys104, Cys107, Cys110, and Cys114.

This sequence belongs to the complex I 23 kDa subunit family. As to quaternary structure, NDH is composed of at least 16 different subunits, 5 of which are encoded in the nucleus. Requires [4Fe-4S] cluster as cofactor.

The protein resides in the plastid. Its subcellular location is the chloroplast thylakoid membrane. The enzyme catalyses a plastoquinone + NADH + (n+1) H(+)(in) = a plastoquinol + NAD(+) + n H(+)(out). It carries out the reaction a plastoquinone + NADPH + (n+1) H(+)(in) = a plastoquinol + NADP(+) + n H(+)(out). NDH shuttles electrons from NAD(P)H:plastoquinone, via FMN and iron-sulfur (Fe-S) centers, to quinones in the photosynthetic chain and possibly in a chloroplast respiratory chain. The immediate electron acceptor for the enzyme in this species is believed to be plastoquinone. Couples the redox reaction to proton translocation, and thus conserves the redox energy in a proton gradient. In Crucihimalaya wallichii (Rock-cress), this protein is NAD(P)H-quinone oxidoreductase subunit I, chloroplastic.